Here is a 210-residue protein sequence, read N- to C-terminus: N-(5'-phosphoribosyl)anthranilate isomerase (210 aa).

Belongs to the TrpF family.

The catalysed reaction is N-(5-phospho-beta-D-ribosyl)anthranilate = 1-(2-carboxyphenylamino)-1-deoxy-D-ribulose 5-phosphate. The protein operates within amino-acid biosynthesis; L-tryptophan biosynthesis; L-tryptophan from chorismate: step 3/5. The sequence is that of N-(5'-phosphoribosyl)anthranilate isomerase from Trichormus variabilis (strain ATCC 29413 / PCC 7937) (Anabaena variabilis).